We begin with the raw amino-acid sequence, 363 residues long: Adenosine 3'-phospho 5'-phosphosulfate transporter 2 (363 aa).

10 helical membrane passes run 39-59, 63-83, 106-126, 131-151, 157-177, 187-206, 231-251, 257-277, 281-301, and 310-330; these read WLQFVLLSGAIFILYLGYGYM, IFKLPGMKPFGWTLTLIQFVI, IYGVIAFFTVATMGLSNASVG, PTQVIFKCCKLIPVLIGGILI, GWIDISAAILMSLGIIMFTLA, SRGYIMISGALLADAVIGNI, VFIFTYVVLSGEIFSAIPFFL, TFGYALIFSFLGYLGVNVVLT, VFGALVAVTVTTLRKALTIIL, and FTIEYVYAGSVVMLAIYLNLY.

This sequence belongs to the nucleotide-sugar transporter family. SLC35B subfamily.

It is found in the golgi apparatus membrane. Functionally, mediates the transport of adenosine 3'-phospho 5'-phosphosulfate (PAPS), from cytosol into Golgi. PAPS is a universal sulfuryl donor for sulfation events that take place in the Golgi. In Caenorhabditis briggsae, this protein is Adenosine 3'-phospho 5'-phosphosulfate transporter 2 (pst-2).